The chain runs to 548 residues: Chaperonin GroEL (548 aa).

ATP contacts are provided by residues 30 to 33 (TLGP), K51, 87 to 91 (DGTTT), G415, 479 to 481 (NAA), and D495.

It belongs to the chaperonin (HSP60) family. Forms a cylinder of 14 subunits composed of two heptameric rings stacked back-to-back. Interacts with the co-chaperonin GroES.

The protein localises to the cytoplasm. The catalysed reaction is ATP + H2O + a folded polypeptide = ADP + phosphate + an unfolded polypeptide.. Functionally, together with its co-chaperonin GroES, plays an essential role in assisting protein folding. The GroEL-GroES system forms a nano-cage that allows encapsulation of the non-native substrate proteins and provides a physical environment optimized to promote and accelerate protein folding. This chain is Chaperonin GroEL, found in Klebsiella pneumoniae (strain 342).